We begin with the raw amino-acid sequence, 313 residues long: tRNA dimethylallyltransferase (313 aa).

9–16 provides a ligand contact to ATP; that stretch reads GPTATGKS. Residue 11–16 coordinates substrate; the sequence is TATGKS.

This sequence belongs to the IPP transferase family. As to quaternary structure, monomer. The cofactor is Mg(2+).

The enzyme catalyses adenosine(37) in tRNA + dimethylallyl diphosphate = N(6)-dimethylallyladenosine(37) in tRNA + diphosphate. Catalyzes the transfer of a dimethylallyl group onto the adenine at position 37 in tRNAs that read codons beginning with uridine, leading to the formation of N6-(dimethylallyl)adenosine (i(6)A). The sequence is that of tRNA dimethylallyltransferase from Mycobacteroides abscessus (strain ATCC 19977 / DSM 44196 / CCUG 20993 / CIP 104536 / JCM 13569 / NCTC 13031 / TMC 1543 / L948) (Mycobacterium abscessus).